A 337-amino-acid chain; its full sequence is Ketol-acid reductoisomerase (NADP(+)) (337 aa).

The region spanning 2–182 is the KARI N-terminal Rossmann domain; the sequence is AKIFYDNDAD…GATRAGVLLT (181 aa). NADP(+)-binding positions include 25–28, Ser51, Ser53, and 83–86; these read YGSQ and DTSQ. His108 is an active-site residue. Gly134 contributes to the NADP(+) binding site. The KARI C-terminal knotted domain occupies 183 to 328; it reads TFAEETETDL…ANLRKMMPFI (146 aa). The Mg(2+) site is built by Asp191, Glu195, Glu227, and Glu231. Ser252 is a binding site for substrate.

It belongs to the ketol-acid reductoisomerase family. Mg(2+) serves as cofactor.

The catalysed reaction is (2R)-2,3-dihydroxy-3-methylbutanoate + NADP(+) = (2S)-2-acetolactate + NADPH + H(+). The enzyme catalyses (2R,3R)-2,3-dihydroxy-3-methylpentanoate + NADP(+) = (S)-2-ethyl-2-hydroxy-3-oxobutanoate + NADPH + H(+). It functions in the pathway amino-acid biosynthesis; L-isoleucine biosynthesis; L-isoleucine from 2-oxobutanoate: step 2/4. It participates in amino-acid biosynthesis; L-valine biosynthesis; L-valine from pyruvate: step 2/4. In terms of biological role, involved in the biosynthesis of branched-chain amino acids (BCAA). Catalyzes an alkyl-migration followed by a ketol-acid reduction of (S)-2-acetolactate (S2AL) to yield (R)-2,3-dihydroxy-isovalerate. In the isomerase reaction, S2AL is rearranged via a Mg-dependent methyl migration to produce 3-hydroxy-3-methyl-2-ketobutyrate (HMKB). In the reductase reaction, this 2-ketoacid undergoes a metal-dependent reduction by NADPH to yield (R)-2,3-dihydroxy-isovalerate. The chain is Ketol-acid reductoisomerase (NADP(+)) from Sorangium cellulosum (strain So ce56) (Polyangium cellulosum (strain So ce56)).